The sequence spans 191 residues: MKKQLLAALIGGSLLAPMAASAADYVIDREGAHASITFKVSHLGYSYVVGRFNDFSGDFSYDAKNPTAAKVNVKVNTLSVDSNHAERDKHIRSGDFLNTAKFAEATFVSTSVEDKGNGDMVITGNFTLNGVTKPLAIQAHAVGEGQDPWGGYRAGFIGTTTFAMKDYGIKMDLGPASANVELDLVVEGVRK.

Positions 1–22 (MKKQLLAALIGGSLLAPMAASA) are cleaved as a signal peptide.

Belongs to the UPF0312 family. Type 1 subfamily.

Its subcellular location is the periplasm. The sequence is that of UPF0312 protein Shewmr4_1178 from Shewanella sp. (strain MR-4).